Consider the following 596-residue polypeptide: Tripeptidyl-peptidase SED2 (596 aa).

A signal peptide spans 1–16; it reads MLVLKFVCLLASVAAA. The propeptide at 18-203 is removed in mature form; it reads PTSWSSHKVV…LEAMSEEEFS (186 aa). The Peptidase S53 domain occupies 210 to 596; that stretch reads LVTTACLREL…NFQALTKVLP (387 aa). An N-linked (GlcNAc...) asparagine glycan is attached at N265. Residues E286 and D290 each act as charge relay system in the active site. A glycan (N-linked (GlcNAc...) asparagine) is linked at N403. S501 functions as the Charge relay system in the catalytic mechanism. Residues D543 and I544 each coordinate Ca(2+). N572 carries N-linked (GlcNAc...) asparagine glycosylation. G576 and D578 together coordinate Ca(2+).

Ca(2+) serves as cofactor.

It localises to the secreted. It is found in the extracellular space. It carries out the reaction Release of an N-terminal tripeptide from a polypeptide.. In terms of biological role, secreted tripeptidyl-peptidase which degrades proteins at acidic pHs and is involved in virulence. The protein is Tripeptidyl-peptidase SED2 (SED2) of Arthroderma otae (strain ATCC MYA-4605 / CBS 113480) (Microsporum canis).